The chain runs to 209 residues: Uracil phosphoribosyltransferase (209 aa).

5-phospho-alpha-D-ribose 1-diphosphate contacts are provided by residues R79, R104, and 131-139; that span reads DPMLATGGS. Residues I194 and 199 to 201 contribute to the uracil site; that span reads GDA. Residue D200 participates in 5-phospho-alpha-D-ribose 1-diphosphate binding.

It belongs to the UPRTase family. Mg(2+) serves as cofactor.

The enzyme catalyses UMP + diphosphate = 5-phospho-alpha-D-ribose 1-diphosphate + uracil. It functions in the pathway pyrimidine metabolism; UMP biosynthesis via salvage pathway; UMP from uracil: step 1/1. Its activity is regulated as follows. Allosterically activated by GTP. Its function is as follows. Catalyzes the conversion of uracil and 5-phospho-alpha-D-ribose 1-diphosphate (PRPP) to UMP and diphosphate. In Natranaerobius thermophilus (strain ATCC BAA-1301 / DSM 18059 / JW/NM-WN-LF), this protein is Uracil phosphoribosyltransferase.